A 318-amino-acid chain; its full sequence is Biotin synthase (318 aa).

One can recognise a Radical SAM core domain in the interval 46–272 (DGVDVEQLNN…RSVVKISGGR (227 aa)). [4Fe-4S] cluster is bound by residues C61, C65, and C68. C105, C138, C197, and K267 together coordinate [2Fe-2S] cluster.

The protein belongs to the radical SAM superfamily. Biotin synthase family. As to quaternary structure, homodimer. Requires [4Fe-4S] cluster as cofactor. [2Fe-2S] cluster serves as cofactor.

The enzyme catalyses (4R,5S)-dethiobiotin + (sulfur carrier)-SH + 2 reduced [2Fe-2S]-[ferredoxin] + 2 S-adenosyl-L-methionine = (sulfur carrier)-H + biotin + 2 5'-deoxyadenosine + 2 L-methionine + 2 oxidized [2Fe-2S]-[ferredoxin]. It functions in the pathway cofactor biosynthesis; biotin biosynthesis; biotin from 7,8-diaminononanoate: step 2/2. In terms of biological role, catalyzes the conversion of dethiobiotin (DTB) to biotin by the insertion of a sulfur atom into dethiobiotin via a radical-based mechanism. This chain is Biotin synthase, found in Cenarchaeum symbiosum (strain A).